Reading from the N-terminus, the 742-residue chain is Catalase-peroxidase (742 aa).

A disordered region spans residues 1–43 (MSDSCPVAHEGNTQSTSESENPVIPSPTPAANRPRNNRDWWPN). A compositionally biased stretch (polar residues) spans 11-20 (GNTQSTSESE). A cross-link (tryptophyl-tyrosyl-methioninium (Trp-Tyr) (with M-257)) is located at residues 109–231 (WHAAGTYRIA…LGAVQMGLIY (123 aa)). The Proton acceptor role is filled by His110. The tryptophyl-tyrosyl-methioninium (Tyr-Met) (with W-109) cross-link spans 231–257 (YVNPEGPNGQPDPLAAARDIRETFSRM). His272 contacts heme b.

This sequence belongs to the peroxidase family. Peroxidase/catalase subfamily. As to quaternary structure, homodimer or homotetramer. Heme b serves as cofactor. In terms of processing, formation of the three residue Trp-Tyr-Met cross-link is important for the catalase, but not the peroxidase activity of the enzyme.

It carries out the reaction H2O2 + AH2 = A + 2 H2O. It catalyses the reaction 2 H2O2 = O2 + 2 H2O. Functionally, bifunctional enzyme with both catalase and broad-spectrum peroxidase activity. This chain is Catalase-peroxidase, found in Rhodococcus jostii (strain RHA1).